We begin with the raw amino-acid sequence, 194 residues long: uncharacterized protein (194 aa).

Residues 1–29 form the signal peptide; that stretch reads MKKAFLVFLSVVLVTTVFLVKQQESVAQA. Residues 104–131 adopt a coiled-coil conformation; that stretch reads KVDELLKKAGQIVEEKVEAAKEIAASKD. The helical transmembrane segment at 149-171 threads the bilayer; the sequence is YFYYVSYVAAAGALILIILAIDI.

The protein resides in the membrane. This is an uncharacterized protein from Bacillus subtilis (strain 168).